A 221-amino-acid polypeptide reads, in one-letter code: Protein FixW (221 aa).

In terms of domain architecture, Thioredoxin spans 5–156 (LNLGSPAPPI…LPKVIDGNWR (152 aa)). A disulfide bond links C43 and C46.

This sequence belongs to the thioredoxin family.

The protein is Protein FixW (fixW) of Rhizobium leguminosarum.